The primary structure comprises 98 residues: Histone H4-1 (98 aa).

The span at 1–14 (MGGKGGKGGKGLGK) shows a compositional bias: gly residues. Residues 1–20 (MGGKGGKGGKGLGKVGAKKR) are disordered.

The protein belongs to the histone H4 family. In terms of assembly, the nucleosome is a histone octamer containing two molecules each of H2A, H2B, H3 and H4 assembled in one H3-H4 heterotetramer and two H2A-H2B heterodimers. The octamer wraps approximately 147 bp of DNA.

It localises to the nucleus. The protein localises to the chromosome. Its function is as follows. Core component of nucleosome. Nucleosomes wrap and compact DNA into chromatin, limiting DNA accessibility to the cellular machineries which require DNA as a template. Histones thereby play a central role in transcription regulation, DNA repair, DNA replication and chromosomal stability. DNA accessibility is regulated via a complex set of post-translational modifications of histones, also called histone code, and nucleosome remodeling. The chain is Histone H4-1 from Blepharisma japonicum.